A 204-amino-acid chain; its full sequence is MRVINLGRQDYLNIWDKMKTFTNTRDKNTKDELWIVEHNPVFTQGVSSKPEHILSNTDIPIVQTDRGGQVTYHGPGQVIIYCLFDLKRLGMGVKRIIEIIENSIIDLLRTYTIKAHLKSGAPGVYIDNAKIAALGLRIKQSRIYHGLSLNIDMDLSPFIQINPCGYQNLKVTQLCDLTDSRDTLNIIAKKLSQILINYVSRNRH.

The BPL/LPL catalytic domain maps to 27–204; the sequence is KNTKDELWIV…LINYVSRNRH (178 aa). Substrate contacts are provided by residues 66 to 73, 133 to 135, and 146 to 148; these read RGGQVTYH, ALG, and GLS. C164 acts as the Acyl-thioester intermediate in catalysis.

It belongs to the LipB family.

The protein localises to the cytoplasm. The enzyme catalyses octanoyl-[ACP] + L-lysyl-[protein] = N(6)-octanoyl-L-lysyl-[protein] + holo-[ACP] + H(+). The protein operates within protein modification; protein lipoylation via endogenous pathway; protein N(6)-(lipoyl)lysine from octanoyl-[acyl-carrier-protein]: step 1/2. Functionally, catalyzes the transfer of endogenously produced octanoic acid from octanoyl-acyl-carrier-protein onto the lipoyl domains of lipoate-dependent enzymes. Lipoyl-ACP can also act as a substrate although octanoyl-ACP is likely to be the physiological substrate. The chain is Octanoyltransferase from Vesicomyosocius okutanii subsp. Calyptogena okutanii (strain HA).